We begin with the raw amino-acid sequence, 194 residues long: Fe/S biogenesis protein NfuA (194 aa).

Residues Cys-152 and Cys-155 each coordinate [4Fe-4S] cluster.

The protein belongs to the NfuA family. As to quaternary structure, homodimer. [4Fe-4S] cluster is required as a cofactor.

Involved in iron-sulfur cluster biogenesis. Binds a 4Fe-4S cluster, can transfer this cluster to apoproteins, and thereby intervenes in the maturation of Fe/S proteins. Could also act as a scaffold/chaperone for damaged Fe/S proteins. In Azotobacter vinelandii (strain DJ / ATCC BAA-1303), this protein is Fe/S biogenesis protein NfuA.